We begin with the raw amino-acid sequence, 483 residues long: Membrane-bound lytic murein transglycosylase F (483 aa).

The first 18 residues, 1–18, serve as a signal peptide directing secretion; it reads MKGLIARFIAGFALLLWA. A non-LT domain region spans residues 19–267; it reads WDMVFPWQQL…RIEEKYFNHL (249 aa). The tract at residues 269–483 is LT domain; the sequence is HFDYVDIQSY…SKESDSTLKE (215 aa). Glu-312 is a catalytic residue. A disordered region spans residues 458–483; it reads QQIQNNEEQPSVPQEISKESDSTLKE. Positions 473–483 are enriched in basic and acidic residues; that stretch reads ISKESDSTLKE.

The protein in the N-terminal section; belongs to the bacterial solute-binding protein 3 family. This sequence in the C-terminal section; belongs to the transglycosylase Slt family.

The protein resides in the cell outer membrane. The enzyme catalyses Exolytic cleavage of the (1-&gt;4)-beta-glycosidic linkage between N-acetylmuramic acid (MurNAc) and N-acetylglucosamine (GlcNAc) residues in peptidoglycan, from either the reducing or the non-reducing ends of the peptidoglycan chains, with concomitant formation of a 1,6-anhydrobond in the MurNAc residue.. Functionally, murein-degrading enzyme that degrades murein glycan strands and insoluble, high-molecular weight murein sacculi, with the concomitant formation of a 1,6-anhydromuramoyl product. Lytic transglycosylases (LTs) play an integral role in the metabolism of the peptidoglycan (PG) sacculus. Their lytic action creates space within the PG sacculus to allow for its expansion as well as for the insertion of various structures such as secretion systems and flagella. The polypeptide is Membrane-bound lytic murein transglycosylase F (Actinobacillus pleuropneumoniae serotype 5b (strain L20)).